We begin with the raw amino-acid sequence, 314 residues long: GTPase-interacting component 1 (314 aa).

Disordered stretches follow at residues 112 to 156, 199 to 221, and 241 to 261; these read SRRH…KHDV, TMDS…QLDS, and LGDS…SFSG. Positions 126-139 constitute a CRIB domain; the sequence is ISTPFDFHHISHAN. Over residues 140–156 the composition is skewed to basic and acidic residues; sequence GKREDNPLESHEEKHDV. A compositionally biased stretch (polar residues) spans 208–221; that stretch reads ETNNTPNGNKQLDS. The span at 251–260 shows a compositional bias: low complexity; it reads PSSPSVSSFS.

Belongs to the BORG/CEP family. In terms of assembly, interacts with GTP-bound CDC42.

Its subcellular location is the bud neck. It is found in the bud tip. The protein resides in the cytoplasm. It localises to the cell cortex. The protein localises to the cytoskeleton. In terms of biological role, required for cell size and shape control, bud site selection, bud emergence, actin cytoskeletal organization, mitotic spindle orientation/positioning, and mating projection formation in response to mating pheromone. This Saccharomyces cerevisiae (strain ATCC 204508 / S288c) (Baker's yeast) protein is GTPase-interacting component 1 (GIC1).